The sequence spans 75 residues: Antimicrobial peptide Meucin-49-1 (75 aa).

Residues 1–22 (MNKKILLVIFIVTMLIVDEVNS) form the signal peptide.

It belongs to the non-disulfide-bridged peptide (NDBP) superfamily. Long chain multifunctional peptide (group 2) family. In terms of tissue distribution, expressed by the venom gland.

It localises to the secreted. Functionally, antimicrobial peptide. This Mesobuthus eupeus (Lesser Asian scorpion) protein is Antimicrobial peptide Meucin-49-1.